The sequence spans 234 residues: Phosphoribosylaminoimidazole-succinocarboxamide synthase (234 aa).

It belongs to the SAICAR synthetase family.

The catalysed reaction is 5-amino-1-(5-phospho-D-ribosyl)imidazole-4-carboxylate + L-aspartate + ATP = (2S)-2-[5-amino-1-(5-phospho-beta-D-ribosyl)imidazole-4-carboxamido]succinate + ADP + phosphate + 2 H(+). It participates in purine metabolism; IMP biosynthesis via de novo pathway; 5-amino-1-(5-phospho-D-ribosyl)imidazole-4-carboxamide from 5-amino-1-(5-phospho-D-ribosyl)imidazole-4-carboxylate: step 1/2. This is Phosphoribosylaminoimidazole-succinocarboxamide synthase from Sulfurisphaera tokodaii (strain DSM 16993 / JCM 10545 / NBRC 100140 / 7) (Sulfolobus tokodaii).